The primary structure comprises 138 residues: Small ribosomal subunit protein uS11c (138 aa).

Positions 1–22 are disordered; that stretch reads MAKSIPRISSRRNGPIGSGKTV.

It belongs to the universal ribosomal protein uS11 family. In terms of assembly, part of the 30S ribosomal subunit.

The protein localises to the plastid. The sequence is that of Small ribosomal subunit protein uS11c from Cuscuta exaltata (Tall dodder).